The sequence spans 257 residues: MKIFRLPALSDNYIFLLHDPQRNIAAVVDPAEPEPVLTCLKKLGAELVTIFNTHHHGDHVGANRALIEHFPNLTVYGGEEDRGRIPGQEVFLKEGDRVQFGDRSGEVFFVPGHTRAHIAYYFPPQGEEETGELFCGDTIFAGGCGRLFEGTPAQMVNSLSKLRALPDNTRIWCAHEYTLNNLKFALTVEPENIDLQNRFSDVKIARSEGEATVPSLLGIEKLTNPFLRWDTQAIKSAMGSQDSVQVFGRLRGKKDNF.

Zn(2+) contacts are provided by H54, H56, D58, H59, H113, D137, and H175.

The protein belongs to the metallo-beta-lactamase superfamily. Glyoxalase II family. As to quaternary structure, monomer. Requires Zn(2+) as cofactor.

It carries out the reaction an S-(2-hydroxyacyl)glutathione + H2O = a 2-hydroxy carboxylate + glutathione + H(+). Its pathway is secondary metabolite metabolism; methylglyoxal degradation; (R)-lactate from methylglyoxal: step 2/2. Thiolesterase that catalyzes the hydrolysis of S-D-lactoyl-glutathione to form glutathione and D-lactic acid. The chain is Hydroxyacylglutathione hydrolase from Gloeothece citriformis (strain PCC 7424) (Cyanothece sp. (strain PCC 7424)).